Here is a 417-residue protein sequence, read N- to C-terminus: Gamma-glutamyl phosphate reductase (417 aa).

It belongs to the gamma-glutamyl phosphate reductase family.

The protein resides in the cytoplasm. It carries out the reaction L-glutamate 5-semialdehyde + phosphate + NADP(+) = L-glutamyl 5-phosphate + NADPH + H(+). It participates in amino-acid biosynthesis; L-proline biosynthesis; L-glutamate 5-semialdehyde from L-glutamate: step 2/2. Its function is as follows. Catalyzes the NADPH-dependent reduction of L-glutamate 5-phosphate into L-glutamate 5-semialdehyde and phosphate. The product spontaneously undergoes cyclization to form 1-pyrroline-5-carboxylate. In Escherichia fergusonii (strain ATCC 35469 / DSM 13698 / CCUG 18766 / IAM 14443 / JCM 21226 / LMG 7866 / NBRC 102419 / NCTC 12128 / CDC 0568-73), this protein is Gamma-glutamyl phosphate reductase.